Here is a 473-residue protein sequence, read N- to C-terminus: Glycosyl hydrolase family 109 protein 2 (473 aa).

A signal peptide (tat-type signal) is located at residues 1 to 31; the sequence is MSIFSSRRQFLKSLGLAAGAAAAGNALPGKA. NAD(+)-binding positions include 77–78, D99, 148–151, 168–169, and N197; these read GR, WSSH, and EV. Substrate is bound by residues Y226, R244, 256 to 259, and Y339; that span reads YPTH. Y256 contributes to the NAD(+) binding site.

The protein belongs to the Gfo/Idh/MocA family. Glycosyl hydrolase 109 subfamily. It depends on NAD(+) as a cofactor. Predicted to be exported by the Tat system. The position of the signal peptide cleavage has not been experimentally proven.

Functionally, glycosidase. The protein is Glycosyl hydrolase family 109 protein 2 of Akkermansia muciniphila (strain ATCC BAA-835 / DSM 22959 / JCM 33894 / BCRC 81048 / CCUG 64013 / CIP 107961 / Muc).